A 73-amino-acid polypeptide reads, in one-letter code: Putative defensin-like protein 33 (73 aa).

A signal peptide spans 1–25 (MASNKVSFIFILFLCVLSTAEFGEA). 3 disulfides stabilise this stretch: cysteine 33–cysteine 59, cysteine 45–cysteine 68, and cysteine 49–cysteine 70.

The protein belongs to the DEFL family.

It is found in the secreted. This chain is Putative defensin-like protein 33, found in Arabidopsis thaliana (Mouse-ear cress).